A 163-amino-acid polypeptide reads, in one-letter code: Protein YtsP (163 aa).

This sequence belongs to the free Met sulfoxide reductase family.

The sequence is that of Protein YtsP (ytsP) from Bacillus subtilis (strain 168).